The primary structure comprises 95 residues: CRISPR-associated endoribonuclease Cas2 3 (95 aa).

Mg(2+) is bound at residue Asp-7.

This sequence belongs to the CRISPR-associated endoribonuclease Cas2 protein family. As to quaternary structure, homodimer, forms a heterotetramer with a Cas1 homodimer. It depends on Mg(2+) as a cofactor.

Functionally, CRISPR (clustered regularly interspaced short palindromic repeat), is an adaptive immune system that provides protection against mobile genetic elements (viruses, transposable elements and conjugative plasmids). CRISPR clusters contain sequences complementary to antecedent mobile elements and target invading nucleic acids. CRISPR clusters are transcribed and processed into CRISPR RNA (crRNA). Functions as a ssRNA-specific endoribonuclease. Involved in the integration of spacer DNA into the CRISPR cassette. The chain is CRISPR-associated endoribonuclease Cas2 3 from Rhodospirillum rubrum (strain ATCC 11170 / ATH 1.1.1 / DSM 467 / LMG 4362 / NCIMB 8255 / S1).